The chain runs to 406 residues: Mitochondrial potassium channel (406 aa).

Residues 1–35 (MTGCSPVFAMQHVVGVPRILVRRTFLGTDVTMTRT) constitute a mitochondrion transit peptide. Residues 36-198 (LCSPGPREKR…KERTRAERTK (163 aa)) lie on the Mitochondrial matrix side of the membrane. Residues 113 to 140 (VREAREGLEAQQTKLKEVRDRLDRVSRE) adopt a coiled-coil conformation. Residues 199-219 (NWSLIGSVLGALIGVAGSTYV) form a helical membrane-spanning segment. Topologically, residues 220–382 (NRVRLQELKA…LEAQANRNTV (163 aa)) are mitochondrial intermembrane. Residues 383–403 (SSTLVTCVTFLATLPLLYMLF) form a helical membrane-spanning segment. Residues 404–406 (KTS) are Mitochondrial matrix-facing.

As to quaternary structure, the mitochondrial potassium channel (mitoK(ATP)) is composed of 4 subunits of CCDC51/MITOK and 4 subunits of ABCB8/MITOSUR.

It localises to the mitochondrion inner membrane. The enzyme catalyses K(+)(in) = K(+)(out). Its activity is regulated as follows. Inhibited by ATP via mitoK(ATP) channel. Its function is as follows. Pore-forming subunit of the mitochondrial ATP-gated potassium channel (mitoK(ATP)). Together with ATP-binding subunit ABCB8/MITOSUR of the mitoK(ATP) channel, mediates ATP-dependent K(+) currents across the mitochondrial inner membrane. An increase in ATP intracellular levels closes the channel, inhibiting K(+) transport, whereas a decrease in ATP levels enhances K(+) uptake in the mitochondrial matrix. May contribute to the homeostatic control of cellular metabolism under stress conditions by regulating the mitochondrial matrix volume. The sequence is that of Mitochondrial potassium channel from Mus musculus (Mouse).